The chain runs to 466 residues: Cysteine--tRNA ligase (466 aa).

Residue cysteine 27 coordinates Zn(2+). Positions 29–39 (PTVYNYIHIGN) match the 'HIGH' region motif. The Zn(2+) site is built by cysteine 207, histidine 232, and glutamate 236. Residues 264–268 (KMSKS) carry the 'KMSKS' region motif. An ATP-binding site is contributed by lysine 267.

Belongs to the class-I aminoacyl-tRNA synthetase family. Monomer. Zn(2+) serves as cofactor.

It localises to the cytoplasm. It catalyses the reaction tRNA(Cys) + L-cysteine + ATP = L-cysteinyl-tRNA(Cys) + AMP + diphosphate. This is Cysteine--tRNA ligase from Thermoanaerobacter pseudethanolicus (strain ATCC 33223 / 39E) (Clostridium thermohydrosulfuricum).